The chain runs to 151 residues: Major latex allergen Hev b 5 (151 aa).

The segment at 1–151 is disordered; that stretch reads MASVEVESAA…TEVPVEKTEE (151 aa). A2 is subject to N-acetylalanine. The segment covering 17-31 has biased composition (basic and acidic residues); that stretch reads ETPEVTKAEETKTEE. 2 stretches are compositionally biased toward low complexity: residues 36–45 and 53–64; these read PASEQETADA and TAAPAEPEAPAP. Basic and acidic residues-rich tracts occupy residues 65 to 80, 103 to 113, and 122 to 133; these read ETEK…KTEE, EEPKHETKETE, and EGEKPAEEEKPI. Positions 134–144 are enriched in low complexity; sequence TEAAETATTEV.

This sequence to kiwi fruit protein PKIWI501. The N-terminus is blocked.

In Hevea brasiliensis (Para rubber tree), this protein is Major latex allergen Hev b 5.